A 964-amino-acid polypeptide reads, in one-letter code: Protein translocase subunit SecA (964 aa).

Residues Gln-86, 104-108 (GEGKT), and Asp-494 contribute to the ATP site. Residues 848–964 (AESADTIAVA…YKMCHGQNEK (117 aa)) form a disordered region. Over residues 871–882 (AEGEVEEEDEDT) the composition is skewed to acidic residues. Low complexity predominate over residues 889–900 (AESAAASGAGES). Zn(2+) is bound by residues Cys-947, Cys-949, Cys-958, and His-959.

Belongs to the SecA family. Monomer and homodimer. Part of the essential Sec protein translocation apparatus which comprises SecA, SecYEG and auxiliary proteins SecDF. Other proteins may also be involved. The cofactor is Zn(2+).

It localises to the cell membrane. The protein resides in the cytoplasm. The catalysed reaction is ATP + H2O + cellular proteinSide 1 = ADP + phosphate + cellular proteinSide 2.. Functionally, part of the Sec protein translocase complex. Interacts with the SecYEG preprotein conducting channel. Has a central role in coupling the hydrolysis of ATP to the transfer of proteins into and across the cell membrane, serving as an ATP-driven molecular motor driving the stepwise translocation of polypeptide chains across the membrane. The polypeptide is Protein translocase subunit SecA (Bifidobacterium longum (strain DJO10A)).